The chain runs to 223 residues: Deoxyribose-phosphate aldolase (223 aa).

Catalysis depends on aspartate 91, which acts as the Proton donor/acceptor. Lysine 153 functions as the Schiff-base intermediate with acetaldehyde in the catalytic mechanism. Lysine 182 serves as the catalytic Proton donor/acceptor.

It belongs to the DeoC/FbaB aldolase family. DeoC type 1 subfamily.

The protein resides in the cytoplasm. It carries out the reaction 2-deoxy-D-ribose 5-phosphate = D-glyceraldehyde 3-phosphate + acetaldehyde. Its pathway is carbohydrate degradation; 2-deoxy-D-ribose 1-phosphate degradation; D-glyceraldehyde 3-phosphate and acetaldehyde from 2-deoxy-alpha-D-ribose 1-phosphate: step 2/2. Catalyzes a reversible aldol reaction between acetaldehyde and D-glyceraldehyde 3-phosphate to generate 2-deoxy-D-ribose 5-phosphate. The protein is Deoxyribose-phosphate aldolase of Yersinia pestis bv. Antiqua (strain Angola).